A 542-amino-acid polypeptide reads, in one-letter code: Chaperonin GroEL (542 aa).

ATP-binding positions include 29–32 (TLGP), 86–90 (DGTTT), Gly-413, 476–478 (NAA), and Asp-492.

Belongs to the chaperonin (HSP60) family. Forms a cylinder of 14 subunits composed of two heptameric rings stacked back-to-back. Interacts with the co-chaperonin GroES.

Its subcellular location is the cytoplasm. The enzyme catalyses ATP + H2O + a folded polypeptide = ADP + phosphate + an unfolded polypeptide.. Together with its co-chaperonin GroES, plays an essential role in assisting protein folding. The GroEL-GroES system forms a nano-cage that allows encapsulation of the non-native substrate proteins and provides a physical environment optimized to promote and accelerate protein folding. The chain is Chaperonin GroEL from Lactococcus lactis subsp. cremoris (strain MG1363).